The sequence spans 735 residues: Photosystem I P700 chlorophyll a apoprotein A2 (735 aa).

The next 8 membrane-spanning stretches (helical) occupy residues 47-70, 136-159, 176-200, 274-292, 331-354, 370-396, 418-440, and 518-536; these read IFASHFGQLAIIFLWTSGNLFHVA, LYIGSIFLSFAATAFLFAGWLHLQ, LNHHLSGLFGVSSLAWTGHLIHVAI, MAHHHLAIAVLFIVAGHMY, LHFQLGLALASVGTICSLVAQHMY, ASLYTHHQYIAGFILCGAFAHGAIFFI, AIISHLSWVSLFLGFHTLGLYVH, and FLVHHAIALGLHTTTLILV. Residues Cys560 and Cys569 each contribute to the [4Fe-4S] cluster site. The next 2 membrane-spanning stretches (helical) occupy residues 576-597 and 644-666; these read AFYLAVFWMLNTIGWVTFYFHW and LSVWSWMFLFGHLIYATGFMFLI. The chlorophyll a site is built by His655, Met663, and Tyr671. Trp672 contacts phylloquinone. The chain crosses the membrane as a helical span at residues 708–728; the sequence is VVGLAHFSAGYILTYAAFLIA.

This sequence belongs to the PsaA/PsaB family. As to quaternary structure, the PsaA/B heterodimer binds the P700 chlorophyll special pair and subsequent electron acceptors. PSI consists of a core antenna complex that captures photons, and an electron transfer chain that converts photonic excitation into a charge separation. The eukaryotic PSI reaction center is composed of at least 11 subunits. P700 is a chlorophyll a/chlorophyll a' dimer, A0 is one or more chlorophyll a, A1 is one or both phylloquinones and FX is a shared 4Fe-4S iron-sulfur center. serves as cofactor.

The protein resides in the plastid. It is found in the chloroplast thylakoid membrane. It carries out the reaction reduced [plastocyanin] + hnu + oxidized [2Fe-2S]-[ferredoxin] = oxidized [plastocyanin] + reduced [2Fe-2S]-[ferredoxin]. Its function is as follows. PsaA and PsaB bind P700, the primary electron donor of photosystem I (PSI), as well as the electron acceptors A0, A1 and FX. PSI is a plastocyanin/cytochrome c6-ferredoxin oxidoreductase, converting photonic excitation into a charge separation, which transfers an electron from the donor P700 chlorophyll pair to the spectroscopically characterized acceptors A0, A1, FX, FA and FB in turn. Oxidized P700 is reduced on the lumenal side of the thylakoid membrane by plastocyanin or cytochrome c6. The polypeptide is Photosystem I P700 chlorophyll a apoprotein A2 (Tupiella akineta (Green alga)).